Reading from the N-terminus, the 217-residue chain is ATP synthase subunit a (217 aa).

A run of 6 helical transmembrane segments spans residues 5–25 (EHVI…LAAG), 63–83 (LIAS…LPFV), 89–109 (NINT…FEGF), 120–140 (FMGP…MSHL), 157–177 (GAIL…TLAV), and 191–213 (LAIV…GAVV).

This sequence belongs to the ATPase A chain family. F-type ATPases have 2 components, CF(1) - the catalytic core - and CF(0) - the membrane proton channel. CF(1) has five subunits: alpha(3), beta(3), gamma(1), delta(1), epsilon(1). CF(0) has three main subunits: a(1), b(2) and c(9-12). The alpha and beta chains form an alternating ring which encloses part of the gamma chain. CF(1) is attached to CF(0) by a central stalk formed by the gamma and epsilon chains, while a peripheral stalk is formed by the delta and b chains.

It is found in the cell inner membrane. In terms of biological role, key component of the proton channel; it plays a direct role in the translocation of protons across the membrane. The polypeptide is ATP synthase subunit a (Hydrogenobaculum sp. (strain Y04AAS1)).